A 1063-amino-acid chain; its full sequence is Structural polyprotein (1063 aa).

Residues 1–131 (MASTTPITME…LGPPTNPFQA (131 aa)) are disordered. The human C1QBP/SF2P32-binding stretch occupies residues 30–69 (GASQSRRPRPPRQRDSSTSGDDSGRDSGGPRRRRGNRGRG). The residue at position 46 (Ser-46) is a Phosphoserine; by host. Residues 59–69 (PRRRRGNRGRG) are compositionally biased toward basic residues. Over residues 93-107 (APKPSRAPPQQPQPP) the composition is skewed to pro residues. A disulfide bridge connects residues Cys-153 and Cys-197. A functions as E2 signal peptide region spans residues 279-300 (GAPQAFLAGLLLAAVAVGTARA). The Extracellular portion of the chain corresponds to 301-534 (GLQPRADMAA…LWLATANALS (234 aa)). The tract at residues 305-347 (RADMAAPPAPPQPPCAHGQHYGHHHHQLPFLGHDGHHGGTLRV) is disordered. N-linked (GlcNAc...) asparagine; by host glycosylation is found at Asn-353, Asn-371, Asn-410, and Asn-429. Residues 535 to 555 (LDHALAAFVLLFPWVLIFMVC) form a helical membrane-spanning segment. The Cytoplasmic segment spans residues 556-582 (RRACRRRGAAAALTAVVLQGYNPPAYG). The interval 563-582 (GAAAALTAVVLQGYNPPAYG) is functions as E1 signal peptide. The Extracellular segment spans residues 583-1028 (EEAFTYLCTA…QTWAEWAAAH (446 aa)). 8 disulfides stabilise this stretch: Cys-590/Cys-595, Cys-619/Cys-824, Cys-641/Cys-653, Cys-699/Cys-712, Cys-758/Cys-767, Cys-807/Cys-817, Cys-931/Cys-934, and Cys-950/Cys-983. N-linked (GlcNAc...) asparagine; by host glycosylation occurs at Asn-658. Positions 670 and 671 each coordinate Ca(2+). Ca(2+) is bound by residues Asp-718 and Thr-719. 2 N-linked (GlcNAc...) asparagine; by host glycosylation sites follow: Asn-759 and Asn-791. Residues Thr-1011 and Thr-1012 are each glycosylated (O-linked (GalNAc...) threonine; by host). Residues 1029–1049 (WWQLTLGAVCALLLAGLLACC) traverse the membrane as a helical segment. Residues 1050–1063 (AKCLYYLRGAIAPR) lie on the Extracellular side of the membrane.

Homodimer; further assembles into homooligomer. Interacts with human C1QBP. Interacts (via N-terminus) with protease/methyltransferase p150. As to quaternary structure, heterodimer with spike glycoprotein E2. In terms of assembly, heterodimer with spike glycoprotein E1. Post-translationally, structural polyprotein: Specific enzymatic cleavages in vivo yield mature proteins. Two signal peptidase-mediated cleavages within the polyprotein produce the structural proteins capsid, E2, and E1. The E2 signal peptide remains attached to the C-terminus of the capsid protein after cleavage by the signal peptidase. Another signal peptide at E2 C-terminus directs E1 to the ER, with a similar mechanism. Contains three N-linked oligosaccharides. In terms of processing, capsid is phosphorylated on Ser-46 by host. This phosphorylation negatively regulates capsid protein RNA-binding activity. Dephosphorylated by human PP1A.

It is found in the virion. The protein resides in the host cytoplasm. The protein localises to the host mitochondrion. Its subcellular location is the virion membrane. It localises to the host Golgi apparatus membrane. Capsid protein interacts with genomic RNA and assembles into icosahedric core particles 65-70 nm in diameter. The resulting nucleocapsid eventually associates with the cytoplasmic domain of E2 at the cell membrane, leading to budding and formation of mature virions from host Golgi membranes. Phosphorylation negatively regulates RNA-binding activity, possibly delaying virion assembly during the viral replication phase. Capsid protein dimerizes and becomes disulfide-linked in the virion. Modulates genomic RNA replication. Modulates subgenomic RNA synthesis by interacting with human C1QBP/SF2P32. Induces both perinuclear clustering of mitochondria and the formation of electron-dense intermitochondrial plaques, both hallmarks of rubella virus infected cells. Induces apoptosis when expressed in transfected cells. Functionally, responsible for viral attachment to target host cell, by binding to the cell receptor. Its transport to the plasma membrane depends on interaction with E1 protein. The surface glycoproteins display an irregular helical organization and a pseudo-tetrameric inner nucleocapsid arrangement. In terms of biological role, class II viral fusion protein. Fusion activity is inactive as long as E1 is bound to E2 in mature virion. After virus attachment to target cell and clathrin-mediated endocytosis, acidification of the endosome would induce dissociation of E1/E2 heterodimer and concomitant trimerization of the E1 subunits. This E1 homotrimer is fusion active, and promotes release of viral nucleocapsid in cytoplasm after endosome and viral membrane fusion. The cytoplasmic tail of spike glycoprotein E1 modulates virus release. The surface glycoproteins display an irregular helical organization and a pseudo-tetrameric inner nucleocapsid arrangement. This chain is Structural polyprotein, found in Rubella virus (strain RN-UK86) (RUBV).